A 252-amino-acid polypeptide reads, in one-letter code: tRNA (guanine-N(7)-)-methyltransferase (252 aa).

Residues Glu-80, Glu-105, Asp-132, and Asp-155 each coordinate S-adenosyl-L-methionine. Asp-155 is an active-site residue. Substrate-binding positions include Lys-159, Asp-191, and 231–234 (TKFE).

It belongs to the class I-like SAM-binding methyltransferase superfamily. TrmB family.

It carries out the reaction guanosine(46) in tRNA + S-adenosyl-L-methionine = N(7)-methylguanosine(46) in tRNA + S-adenosyl-L-homocysteine. It functions in the pathway tRNA modification; N(7)-methylguanine-tRNA biosynthesis. Functionally, catalyzes the formation of N(7)-methylguanine at position 46 (m7G46) in tRNA. This Actinobacillus succinogenes (strain ATCC 55618 / DSM 22257 / CCUG 43843 / 130Z) protein is tRNA (guanine-N(7)-)-methyltransferase.